Consider the following 501-residue polypeptide: MSNEEINIHEAEEQLSEQEMLRRQKLVELQEAGKDPFDVYKVERTHSSADVKDNFEELEGKEVKVAGRLMSKRGQGKVVFADLADLPGKIQLFIKIDNVGEEALKEFKTFDLGDWVAATGEVFKTKMGEVSIKVTSFELICKSLKPLPEKWHGLKDPDLRYRQREVDIITNPEVKDTFIKRSQIVKAIREFLDNRGFLEVDTPILSPIAGGAAARPFITHHNALDIDMYLRIATELYLKRLIVAGFEKVYEMGKNFRNEGVSVRHNPEFTAIELYEAYADYNDMMEIMENMIAYVCEKVNGSTKVTYEGTEIDFTPPWRRITMVDAVKEFAGIDFNEIKSDEEAQAIAKEKNLEFPKPLDKVTKGEVLNMLFEEYGEDKLIQPTFLVDYPVEISPLTKKKRGNEMFTERFEGFVYGREVCNAYSELNDPIVQRERFEQQAREREYGDDEAYMLDEEFMSALETGMPPTGGLGIGIDRMIMFLTDSSSIRDVILFPTMKPQK.

Mg(2+) contacts are provided by glutamate 411 and glutamate 418.

It belongs to the class-II aminoacyl-tRNA synthetase family. In terms of assembly, homodimer. It depends on Mg(2+) as a cofactor.

The protein localises to the cytoplasm. It catalyses the reaction tRNA(Lys) + L-lysine + ATP = L-lysyl-tRNA(Lys) + AMP + diphosphate. The chain is Lysine--tRNA ligase from Clostridium perfringens (strain SM101 / Type A).